A 517-amino-acid chain; its full sequence is Enantioselective amidase (517 aa).

Active-site charge relay system residues include lysine 96 and serine 173. The active-site Acyl-ester intermediate is the serine 197.

Belongs to the amidase family. Homooctamer.

It catalyses the reaction a monocarboxylic acid amide + H2O = a monocarboxylate + NH4(+). This Rhodococcus rhodochrous protein is Enantioselective amidase (amdA).